A 567-amino-acid chain; its full sequence is Proline--tRNA ligase (567 aa).

This sequence belongs to the class-II aminoacyl-tRNA synthetase family. ProS type 1 subfamily. Homodimer.

Its subcellular location is the cytoplasm. It carries out the reaction tRNA(Pro) + L-proline + ATP = L-prolyl-tRNA(Pro) + AMP + diphosphate. Catalyzes the attachment of proline to tRNA(Pro) in a two-step reaction: proline is first activated by ATP to form Pro-AMP and then transferred to the acceptor end of tRNA(Pro). As ProRS can inadvertently accommodate and process non-cognate amino acids such as alanine and cysteine, to avoid such errors it has two additional distinct editing activities against alanine. One activity is designated as 'pretransfer' editing and involves the tRNA(Pro)-independent hydrolysis of activated Ala-AMP. The other activity is designated 'posttransfer' editing and involves deacylation of mischarged Ala-tRNA(Pro). The misacylated Cys-tRNA(Pro) is not edited by ProRS. This chain is Proline--tRNA ligase, found in Geobacillus thermodenitrificans (strain NG80-2).